A 189-amino-acid polypeptide reads, in one-letter code: Putative L,D-transpeptidase in ATP synthase subunits region ORF 5 (189 aa).

Positions 1–35 (MTDTLNRRAAMALGLASAAGAALATPALSQDAAPA) form a signal peptide, tat-type signal. Residues 59–189 (PMLVADTFSR…CPVGTRVRVI (131 aa)) form the L,D-TPase catalytic domain. The active-site Proton donor/acceptor is the His149. The active-site Nucleophile is the Cys165.

The protein belongs to the YkuD family. Predicted to be exported by the Tat system. The position of the signal peptide cleavage has not been experimentally proven.

Its pathway is cell wall biogenesis; peptidoglycan biosynthesis. This is Putative L,D-transpeptidase in ATP synthase subunits region ORF 5 from Fuscovulum blasticum (Rhodobacter blasticus).